Here is a 78-residue protein sequence, read N- to C-terminus: MKNLLLTFLVVTIVCLDLGYTLICHQRHGLQTCEPAQKFCFAQTVMPFPNHPLTLMGCTYSCPTEKNAVCCSTDKCNR.

An N-terminal signal peptide occupies residues 1-21 (MKNLLLTFLVVTIVCLDLGYT). 4 disulfides stabilise this stretch: cysteine 24-cysteine 40, cysteine 33-cysteine 58, cysteine 62-cysteine 70, and cysteine 71-cysteine 76.

The protein belongs to the three-finger toxin family. Short-chain subfamily. Expressed by the venom gland.

It is found in the secreted. In terms of biological role, this three-finger toxin binds and inhibits the nicotinic acetylcholine receptor (nAChR). In Ophiophagus hannah (King cobra), this protein is Short neurotoxin OH-26.